The following is a 274-amino-acid chain: Nitrogenase iron protein (274 aa).

8–15 (GKGGIGKS) lines the ATP pocket. [4Fe-4S] cluster is bound at residue C94. R97 carries the ADP-ribosylarginine; by dinitrogenase reductase ADP-ribosyltransferase modification. C131 is a [4Fe-4S] cluster binding site.

This sequence belongs to the NifH/BchL/ChlL family. In terms of assembly, homodimer. It depends on [4Fe-4S] cluster as a cofactor. The reversible ADP-ribosylation of Arg-97 inactivates the nitrogenase reductase and regulates nitrogenase activity.

It carries out the reaction N2 + 8 reduced [2Fe-2S]-[ferredoxin] + 16 ATP + 16 H2O = H2 + 8 oxidized [2Fe-2S]-[ferredoxin] + 2 NH4(+) + 16 ADP + 16 phosphate + 6 H(+). The key enzymatic reactions in nitrogen fixation are catalyzed by the nitrogenase complex, which has 2 components: the iron protein and the molybdenum-iron protein. The sequence is that of Nitrogenase iron protein from Solidesulfovibrio magneticus (strain ATCC 700980 / DSM 13731 / RS-1) (Desulfovibrio magneticus).